A 739-amino-acid chain; its full sequence is Phosphoribosylformylglycinamidine synthase subunit PurL (739 aa).

The active site involves H54. 2 residues coordinate ATP: Y57 and K96. E98 provides a ligand contact to Mg(2+). Residues 99-102 (SHNH) and R121 contribute to the substrate site. H100 acts as the Proton acceptor in catalysis. D122 lines the Mg(2+) pocket. A substrate-binding site is contributed by Q245. A Mg(2+)-binding site is contributed by D273. Substrate is bound at residue 317–319 (ESQ). 2 residues coordinate ATP: D500 and G537. N538 is a binding site for Mg(2+). S540 is a binding site for substrate.

It belongs to the FGAMS family. In terms of assembly, monomer. Part of the FGAM synthase complex composed of 1 PurL, 1 PurQ and 2 PurS subunits.

The protein resides in the cytoplasm. It carries out the reaction N(2)-formyl-N(1)-(5-phospho-beta-D-ribosyl)glycinamide + L-glutamine + ATP + H2O = 2-formamido-N(1)-(5-O-phospho-beta-D-ribosyl)acetamidine + L-glutamate + ADP + phosphate + H(+). It participates in purine metabolism; IMP biosynthesis via de novo pathway; 5-amino-1-(5-phospho-D-ribosyl)imidazole from N(2)-formyl-N(1)-(5-phospho-D-ribosyl)glycinamide: step 1/2. In terms of biological role, part of the phosphoribosylformylglycinamidine synthase complex involved in the purines biosynthetic pathway. Catalyzes the ATP-dependent conversion of formylglycinamide ribonucleotide (FGAR) and glutamine to yield formylglycinamidine ribonucleotide (FGAM) and glutamate. The FGAM synthase complex is composed of three subunits. PurQ produces an ammonia molecule by converting glutamine to glutamate. PurL transfers the ammonia molecule to FGAR to form FGAM in an ATP-dependent manner. PurS interacts with PurQ and PurL and is thought to assist in the transfer of the ammonia molecule from PurQ to PurL. This is Phosphoribosylformylglycinamidine synthase subunit PurL from Bacillus cereus (strain AH187).